The sequence spans 1132 residues: Mediator of RNA polymerase II transcription subunit 5 (1132 aa).

Basic and acidic residues predominate over residues 998–1023 (KGDVDIKGEDLHEKNDSAEVRQETQP). A disordered region spans residues 998–1070 (KGDVDIKGED…RTNNVPMIKA (73 aa)). Over residues 1047-1057 (YEEEEENEDND) the composition is skewed to acidic residues.

The protein belongs to the Mediator complex subunit 5 family. Component of the Mediator complex, which is composed of at least 21 subunits that form three structurally distinct submodules. The Mediator head module contains MED6, MED8, MED11, SRB4/MED17, SRB5/MED18, ROX3/MED19, SRB2/MED20 and SRB6/MED22, the middle module contains MED1, MED4, NUT1/MED5, MED7, CSE2/MED9, NUT2/MED10, SRB7/MED21 and SOH1/MED31, and the tail module contains MED2, PGD1/MED3, RGR1/MED14, GAL11/MED15 and SIN4/MED16. The head and the middle modules interact directly with RNA polymerase II, whereas the elongated tail module interacts with gene-specific regulatory proteins.

It is found in the nucleus. In terms of biological role, component of the Mediator complex, a coactivator involved in the regulated transcription of nearly all RNA polymerase II-dependent genes. Mediator functions as a bridge to convey information from gene-specific regulatory proteins to the basal RNA polymerase II transcription machinery. The Mediator complex, having a compact conformation in its free form, is recruited to promoters by direct interactions with regulatory proteins and serves for the assembly of a functional preinitiation complex with RNA polymerase II and the general transcription factors. The Mediator complex unfolds to an extended conformation and partially surrounds RNA polymerase II, specifically interacting with the unphosphorylated form of the C-terminal domain (CTD) of RNA polymerase II. The Mediator complex dissociates from the RNA polymerase II holoenzyme and stays at the promoter when transcriptional elongation begins. The sequence is that of Mediator of RNA polymerase II transcription subunit 5 (NUT1) from Saccharomyces cerevisiae (strain ATCC 204508 / S288c) (Baker's yeast).